A 420-amino-acid polypeptide reads, in one-letter code: Glutamate dehydrogenase (420 aa).

Residue Lys105 is part of the active site. Position 220–226 (220–226) interacts with NAD(+); that stretch reads GYGNAGY.

Belongs to the Glu/Leu/Phe/Val dehydrogenases family. In terms of assembly, homohexamer.

The protein localises to the cytoplasm. It carries out the reaction L-glutamate + NAD(+) + H2O = 2-oxoglutarate + NH4(+) + NADH + H(+). The catalysed reaction is L-glutamate + NADP(+) + H2O = 2-oxoglutarate + NH4(+) + NADPH + H(+). This Pyrococcus horikoshii (strain ATCC 700860 / DSM 12428 / JCM 9974 / NBRC 100139 / OT-3) protein is Glutamate dehydrogenase (gdhA).